We begin with the raw amino-acid sequence, 146 residues long: Cyanate hydratase (146 aa).

Active-site residues include arginine 87, glutamate 90, and serine 113.

Belongs to the cyanase family.

It carries out the reaction cyanate + hydrogencarbonate + 3 H(+) = NH4(+) + 2 CO2. Functionally, catalyzes the reaction of cyanate with bicarbonate to produce ammonia and carbon dioxide. This chain is Cyanate hydratase, found in Nostoc sp. (strain PCC 7120 / SAG 25.82 / UTEX 2576).